A 491-amino-acid polypeptide reads, in one-letter code: UDP-N-acetylmuramate--L-alanine ligase (491 aa).

126–132 (GTHGKTT) serves as a coordination point for ATP.

It belongs to the MurCDEF family.

It localises to the cytoplasm. It catalyses the reaction UDP-N-acetyl-alpha-D-muramate + L-alanine + ATP = UDP-N-acetyl-alpha-D-muramoyl-L-alanine + ADP + phosphate + H(+). It participates in cell wall biogenesis; peptidoglycan biosynthesis. Functionally, cell wall formation. The chain is UDP-N-acetylmuramate--L-alanine ligase from Salmonella typhimurium (strain LT2 / SGSC1412 / ATCC 700720).